The chain runs to 740 residues: E3 ubiquitin-protein ligase TRIM9 (740 aa).

An RING-type; degenerate zinc finger spans residues 7–30; the sequence is CPTCKQLYANPVLLPCFHALCLGC. Gly residues predominate over residues 64–73; it reads GNGGGAGGGA. The interval 64–114 is disordered; it reads GNGGGAGGGAAAPVTNPNGPGTRHSSHSSAASTASSNTGSESVTSDQDQSD. Low complexity predominate over residues 74–105; it reads AAPVTNPNGPGTRHSSHSSAASTASSNTGSES. The segment at 195-244 adopts a B box-type 1; atypical zinc-finger fold; sequence REALRCQMCETDPKVASLICEQCEIRYCDACRELTHPARGPLAKHTLVKP. Residues cysteine 200, cysteine 203, cysteine 225, histidine 230, cysteine 255, histidine 258, cysteine 277, and histidine 283 each contribute to the Zn(2+) site. Residues 250-291 form a B box-type 2 zinc finger; it reads QRESVCGEHEETLSQYCLSCKAPACGLCIGELRHQAHDVQSI. Residues 294–324 are a coiled coil; the sequence is TCKAQKTELSHNLQQLSEKARSTTEFIQRLK. The COS domain maps to 399 to 459; the sequence is LKETDSAAFL…ARAIDNLNFI (61 aa). A Fibronectin type-III domain is found at 474–567; sequence APMTPTILPS…ELIGLQTAEV (94 aa). In terms of domain architecture, B30.2/SPRY spans 549-736; it reads NSAGEGEYSE…TMHTAMDAPK (188 aa).

Belongs to the TRIM/RBCC family. As to quaternary structure, interacts (via fibronectin type-III domain) with pico. Interacts (via SPRY domain) with netrin receptor fra.

Its subcellular location is the cell projection. It localises to the axon. It is found in the perikaryon. The enzyme catalyses S-ubiquitinyl-[E2 ubiquitin-conjugating enzyme]-L-cysteine + [acceptor protein]-L-lysine = [E2 ubiquitin-conjugating enzyme]-L-cysteine + N(6)-ubiquitinyl-[acceptor protein]-L-lysine.. It functions in the pathway protein modification; protein ubiquitination. In terms of biological role, E3 ubiquitin-protein ligase activity. During embryonic and larval development, regulates the pattern of axonal projections of class IV nociceptive sensory neurons (C4da) downstream of netrin receptor fra. Regulates fine-scale topography of C4da axon terminals upon neuronal activity. During eye development, consolidates the attachment of R8 photoreceptor growth cones to the target medulla layer, probably downstream of fra. This is E3 ubiquitin-protein ligase TRIM9 from Drosophila melanogaster (Fruit fly).